Here is a 149-residue protein sequence, read N- to C-terminus: Nucleoside diphosphate kinase (149 aa).

ATP is bound by residues lysine 9, phenylalanine 57, arginine 85, threonine 91, arginine 102, and asparagine 112. Histidine 115 serves as the catalytic Pros-phosphohistidine intermediate.

The protein belongs to the NDK family. Requires Mg(2+) as cofactor.

The protein resides in the cytoplasm. It carries out the reaction a 2'-deoxyribonucleoside 5'-diphosphate + ATP = a 2'-deoxyribonucleoside 5'-triphosphate + ADP. The catalysed reaction is a ribonucleoside 5'-diphosphate + ATP = a ribonucleoside 5'-triphosphate + ADP. Major role in the synthesis of nucleoside triphosphates other than ATP. The ATP gamma phosphate is transferred to the NDP beta phosphate via a ping-pong mechanism, using a phosphorylated active-site intermediate. In Methanocorpusculum labreanum (strain ATCC 43576 / DSM 4855 / Z), this protein is Nucleoside diphosphate kinase.